The primary structure comprises 663 residues: 4-hydroxy-3-methylbut-2-en-1-yl diphosphate synthase (flavodoxin) (663 aa).

4 residues coordinate [4Fe-4S] cluster: cysteine 568, cysteine 571, cysteine 602, and glutamate 609.

The protein belongs to the IspG family. [4Fe-4S] cluster serves as cofactor.

The catalysed reaction is (2E)-4-hydroxy-3-methylbut-2-enyl diphosphate + oxidized [flavodoxin] + H2O + 2 H(+) = 2-C-methyl-D-erythritol 2,4-cyclic diphosphate + reduced [flavodoxin]. The protein operates within isoprenoid biosynthesis; isopentenyl diphosphate biosynthesis via DXP pathway; isopentenyl diphosphate from 1-deoxy-D-xylulose 5-phosphate: step 5/6. In terms of biological role, converts 2C-methyl-D-erythritol 2,4-cyclodiphosphate (ME-2,4cPP) into 1-hydroxy-2-methyl-2-(E)-butenyl 4-diphosphate. This is 4-hydroxy-3-methylbut-2-en-1-yl diphosphate synthase (flavodoxin) from Leptospira borgpetersenii serovar Hardjo-bovis (strain L550).